The chain runs to 377 residues: Alanine racemase (377 aa).

The active-site Proton acceptor; specific for D-alanine is the K37. K37 carries the post-translational modification N6-(pyridoxal phosphate)lysine. R135 serves as a coordination point for substrate. Residue Y271 is the Proton acceptor; specific for L-alanine of the active site. Residue M319 coordinates substrate.

This sequence belongs to the alanine racemase family. It depends on pyridoxal 5'-phosphate as a cofactor.

It catalyses the reaction L-alanine = D-alanine. It participates in amino-acid biosynthesis; D-alanine biosynthesis; D-alanine from L-alanine: step 1/1. Functionally, catalyzes the interconversion of L-alanine and D-alanine. May also act on other amino acids. The protein is Alanine racemase (alr) of Helicobacter pylori (strain G27).